The sequence spans 241 residues: Uridylate kinase (241 aa).

14-17 (KLSG) provides a ligand contact to ATP. G56 contributes to the UMP binding site. Residues G57 and R61 each contribute to the ATP site. Residues D77 and 138–145 (TGNPFFTT) each bind UMP. T165, Y171, and D174 together coordinate ATP.

This sequence belongs to the UMP kinase family. Homohexamer.

It is found in the cytoplasm. It carries out the reaction UMP + ATP = UDP + ADP. The protein operates within pyrimidine metabolism; CTP biosynthesis via de novo pathway; UDP from UMP (UMPK route): step 1/1. Its activity is regulated as follows. Inhibited by UTP. Functionally, catalyzes the reversible phosphorylation of UMP to UDP. The protein is Uridylate kinase of Psychrobacter cryohalolentis (strain ATCC BAA-1226 / DSM 17306 / VKM B-2378 / K5).